We begin with the raw amino-acid sequence, 126 residues long: Fluoride-specific ion channel FluC (126 aa).

4 helical membrane-spanning segments follow: residues 6–26 (FLAVGVGAALGAWLRWALAIL), 36–56 (YGTLAANLVGGYLIGVAVGFF), 69–89 (LVITGFLGGLTTFSTFSGEVV), and 99–119 (IGVLHIVAHLGGSLFLTMLGF). Na(+)-binding residues include Gly-76 and Thr-79.

The protein belongs to the fluoride channel Fluc/FEX (TC 1.A.43) family.

It localises to the cell inner membrane. It carries out the reaction fluoride(in) = fluoride(out). With respect to regulation, na(+) is not transported, but it plays an essential structural role and its presence is essential for fluoride channel function. In terms of biological role, fluoride-specific ion channel. Important for reducing fluoride concentration in the cell, thus reducing its toxicity. This chain is Fluoride-specific ion channel FluC, found in Ralstonia pickettii (strain 12J).